The sequence spans 1341 residues: MVYSYTEKKRIRKDFGKRPRVLDAPYLLSIQLDSFKKFIEQDPEGHYGLEAAFRSVFPIQSYNGNSELQYVSYRLGEPVFDVKECQIRGVTYSAPLRVKLRLVMYDKDAPAGTVKDIKEQEVYMGEIPLMTDNGTFVINGTERVIVSQLHRSPGVFFDSDKGKTHSSGKVLYNARVIPYRGSWLDFEFDPKDNVFVRIDRRRKLAASVILRALDYTTEQILDMFFDKVSFEVQGKSLVMELVPERLRGETASFDIEANGKVYVEQGRRITARHIRQLGKDGVDQIEVPVEYIVGKISSRDYVNEETGELIAAANQELNLEILALLSQAGHKSIEVLFTNDLDYGPYMSETLRVDSTTDRLSALVEIYRMMRPGEPPTREAAEQLFNSLFFSEDRYDLSAVGRMKFNSSLLREETTGSGILDHSDIIEVMKKLIEIRNGRGEVDDIDHLGNRRIRSVGEMAENQFRVGLVRVERAVKERLSLGDLDAIMPQDLINAKPISAAVKEFFGSSQLSQFMDQNNPLSEVTHKRRISALGPGGLTRERAGFEVRDVHATHYGRLCPIETPEGPNIGLINSLSVYARCNSYGFLETPYRKVVDSKVTDQIDYLSAIEEGQYVIAQANAALETDGSFSDELITARQKGDSGLHPRDHVQYMDVATNQVVSVAASLIPFLEHDDANRALMGANMQRQAVPTLRADKPLVGTGIERSVAVDSGVTAVAKRGGQVQSVDASRIVVKVNEDELVPGEAGIDIYNLTKYTRSNQNTCINQRPTVMPGEPVARGDVLADGPSTDLGELALGQNIRIAFMPWNGYNFEDSILVSERVVQQDRLTTIHIQELSCVARDTKLGSEEITADIPNVGEAALSKLDESGIVYIGAEVKGGDILVGKVTPKGETQLTPEEKLLRAIFGEKASDVKDSSLRVPNSVSGTIIDVQVFTRDGVEKDKRALEIEEMQLKEAKKDITEEFQILEGGLLARVRTLLLSIGYSEEKIASMDRERLFALTLDDESLQNQLEQLAEQYDELKAEFDKKFETKRRKITQGDDLAPGVLKIVKVYLAVKRRIQPGDKMAGRHGNKGVISKICPVEDMPYDEKGQTVEIVLNPLGVPSRMNIGQILETHMGLAAKGIGDKLNEMLKQQQELHKFRNFLQKVYDLGDTRQDVDIAALSDDQVHTLVQNLRDGLPIATPVFDGAPESSIKELLKLGDLPESGQLKMFDGRTGDMFERPVTVGYMYMLKLNHLVDDKMHARSTGSYSLVTQQPLGGKAQFGGQRFGEMEVWALEAYGAAFTLQEMLTVKSDDVNGRTKMYKNIVDGDHRMEPGMPESFNVLLKEIRSLGINIELEDK.

This sequence belongs to the RNA polymerase beta chain family. As to quaternary structure, the RNAP catalytic core consists of 2 alpha, 1 beta, 1 beta' and 1 omega subunit. When a sigma factor is associated with the core the holoenzyme is formed, which can initiate transcription.

It catalyses the reaction RNA(n) + a ribonucleoside 5'-triphosphate = RNA(n+1) + diphosphate. Its function is as follows. DNA-dependent RNA polymerase catalyzes the transcription of DNA into RNA using the four ribonucleoside triphosphates as substrates. In Photobacterium profundum (strain SS9), this protein is DNA-directed RNA polymerase subunit beta.